We begin with the raw amino-acid sequence, 429 residues long: Adenylosuccinate synthetase (429 aa).

GTP contacts are provided by residues 12-18 (GDEGKGK) and 40-42 (GHT). Aspartate 13 functions as the Proton acceptor in the catalytic mechanism. 2 residues coordinate Mg(2+): aspartate 13 and glycine 40. Residues 13–16 (DEGK), 38–41 (NAGH), threonine 128, arginine 142, glutamine 223, threonine 238, and arginine 302 each bind IMP. The active-site Proton donor is histidine 41. 298–304 (VNTGRPR) contacts substrate. Residues arginine 304, 330-332 (KLD), and 412-414 (GVG) each bind GTP.

This sequence belongs to the adenylosuccinate synthetase family. In terms of assembly, homodimer. Mg(2+) serves as cofactor.

The protein localises to the cytoplasm. The enzyme catalyses IMP + L-aspartate + GTP = N(6)-(1,2-dicarboxyethyl)-AMP + GDP + phosphate + 2 H(+). Its pathway is purine metabolism; AMP biosynthesis via de novo pathway; AMP from IMP: step 1/2. In terms of biological role, plays an important role in the de novo pathway of purine nucleotide biosynthesis. Catalyzes the first committed step in the biosynthesis of AMP from IMP. The polypeptide is Adenylosuccinate synthetase (Paenarthrobacter aurescens (strain TC1)).